The chain runs to 52 residues: ATP synthase protein 8 (52 aa).

Residues 10–30 traverse the membrane as a helical segment; it reads FLMSLMIMMILIFMTINFYFF.

It belongs to the ATPase protein 8 family. As to quaternary structure, F-type ATPases have 2 components, CF(1) - the catalytic core - and CF(0) - the membrane proton channel.

Its subcellular location is the mitochondrion membrane. Functionally, mitochondrial membrane ATP synthase (F(1)F(0) ATP synthase or Complex V) produces ATP from ADP in the presence of a proton gradient across the membrane which is generated by electron transport complexes of the respiratory chain. F-type ATPases consist of two structural domains, F(1) - containing the extramembraneous catalytic core and F(0) - containing the membrane proton channel, linked together by a central stalk and a peripheral stalk. During catalysis, ATP synthesis in the catalytic domain of F(1) is coupled via a rotary mechanism of the central stalk subunits to proton translocation. Part of the complex F(0) domain. Minor subunit located with subunit a in the membrane. The polypeptide is ATP synthase protein 8 (MT-ATP8) (Rhipicephalus sanguineus (Brown dog tick)).